Here is a 597-residue protein sequence, read N- to C-terminus: uncharacterized protein (597 aa).

Helical transmembrane passes span 4–23 (LLLALLLCLAVGTAGGFKIV) and 209–231 (FVSVSAPGFVGVTAAMSSAGIAI).

Its subcellular location is the cell membrane. This is an uncharacterized protein from Archaeoglobus fulgidus (strain ATCC 49558 / DSM 4304 / JCM 9628 / NBRC 100126 / VC-16).